The primary structure comprises 151 residues: Large ribosomal subunit protein bL9 (151 aa).

This sequence belongs to the bacterial ribosomal protein bL9 family.

Binds to the 23S rRNA. The sequence is that of Large ribosomal subunit protein bL9 from Bordetella petrii (strain ATCC BAA-461 / DSM 12804 / CCUG 43448).